Reading from the N-terminus, the 490-residue chain is Cobyric acid synthase (490 aa).

The region spanning 252 to 428 is the GATase cobBQ-type domain; sequence ARRVAVVRLP…WHGAFEGDAL (177 aa). The active-site Nucleophile is the cysteine 333. Histidine 420 is a catalytic residue.

This sequence belongs to the CobB/CobQ family. CobQ subfamily.

It functions in the pathway cofactor biosynthesis; adenosylcobalamin biosynthesis. Functionally, catalyzes amidations at positions B, D, E, and G on adenosylcobyrinic A,C-diamide. NH(2) groups are provided by glutamine, and one molecule of ATP is hydrogenolyzed for each amidation. This Mycolicibacterium vanbaalenii (strain DSM 7251 / JCM 13017 / BCRC 16820 / KCTC 9966 / NRRL B-24157 / PYR-1) (Mycobacterium vanbaalenii) protein is Cobyric acid synthase.